The chain runs to 338 residues: DNA-directed RNA polymerase subunit alpha (338 aa).

The interval 1–226 (MLIAQRPTLS…ELFGLARELN (226 aa)) is alpha N-terminal domain (alpha-NTD). The alpha C-terminal domain (alpha-CTD) stretch occupies residues 240 to 338 (DEQLAADLAL…DDAFVEDEQY (99 aa)).

The protein belongs to the RNA polymerase alpha chain family. As to quaternary structure, homodimer. The RNAP catalytic core consists of 2 alpha, 1 beta, 1 beta' and 1 omega subunit. When a sigma factor is associated with the core the holoenzyme is formed, which can initiate transcription.

The enzyme catalyses RNA(n) + a ribonucleoside 5'-triphosphate = RNA(n+1) + diphosphate. Functionally, DNA-dependent RNA polymerase catalyzes the transcription of DNA into RNA using the four ribonucleoside triphosphates as substrates. This chain is DNA-directed RNA polymerase subunit alpha, found in Nocardioides sp. (strain ATCC BAA-499 / JS614).